A 1390-amino-acid chain; its full sequence is Nuclear pore complex protein 14 (1390 aa).

Polar residues-rich tracts occupy residues 434-455 (SQKP…STVF) and 464-521 (LKSS…STPK). Disordered regions lie at residues 434–530 (SQKP…KISD), 851–874 (PSSS…TQAD), and 985–1118 (QEIE…SKAA). A compositionally biased stretch (low complexity) spans 851-864 (PSSSLFSASPSTPS). Residues 986 to 1033 (EIEKASSKVETLNKTEEVKDEKSENEVTPDLKSEEPKSLETKVKEEPK) are compositionally biased toward basic and acidic residues. Residues 1051 to 1071 (KTPSFSFNSTTTPKSTSSTSS) are compositionally biased toward low complexity. Repeat 1 spans residues 1073–1074 (FG). The tract at residues 1073 to 1373 (FGGGLKTQTP…TPAPTSSVFG (301 aa)) is 17 X 2 AA repeats of F-G. Over residues 1078-1090 (KTQTPSSSNSTNI) the composition is skewed to polar residues. The stretch at 1091-1092 (FG) is repeat 2. A compositionally biased stretch (low complexity) spans 1095–1109 (TTTTATPTPASNTSS). 6 tandem repeats follow at residues 1111–1112 (FG), 1122–1123 (FG), 1125–1126 (FG), 1163–1164 (FG), 1166–1167 (FG), and 1178–1179 (FG). Residues 1183-1280 (TAPTVPNVDD…QASAPATGTS (98 aa)) form a disordered region. A compositionally biased stretch (gly residues) spans 1201–1210 (NGGGSGGFMS). Positions 1231–1243 (TSTGTSASSSSWL) are enriched in low complexity. Repeat unit 9 spans residues 1244–1245 (FG). Positions 1264 to 1280 (TAGSSAQQASAPATGTS) are enriched in low complexity. A run of 8 repeats spans residues 1283–1284 (FG), 1289–1290 (FG), 1295–1296 (FG), 1300–1301 (FG), 1315–1316 (FG), 1344–1345 (FG), 1357–1358 (FG), and 1372–1373 (FG). Over residues 1342-1371 (SLFGGGATPQTNTSIFGGGANTTPAPTSSV) the composition is skewed to polar residues. Residues 1342–1390 (SLFGGGATPQTNTSIFGGGANTTPAPTSSVFGGGASANANKPTSFTSWR) are disordered. Positions 1378 to 1390 (ANANKPTSFTSWR) are enriched in polar residues.

Interacts with caspase ced-3 (via propeptide); the interaction tethers ced-3 to the nuclear membrane and prevents its autoprocessing in absence of ced-4.

The protein localises to the nucleus. Its subcellular location is the nuclear pore complex. The protein resides in the nucleus membrane. May serve as a docking site in the receptor-mediated import of substrates across the nuclear pore complex. Plays a role in apoptosis by tethering caspase ced-3 to the nuclear membrane preventing its autoprocessing in absence of ced-4. This chain is Nuclear pore complex protein 14, found in Caenorhabditis elegans.